Consider the following 293-residue polypeptide: Coatomer subunit epsilon-2 (293 aa).

This sequence belongs to the COPE family. As to quaternary structure, oligomeric complex that consists of at least the alpha, beta, beta', gamma, delta, epsilon and zeta subunits.

Its subcellular location is the cytoplasm. It is found in the golgi apparatus membrane. The protein resides in the cytoplasmic vesicle. It localises to the COPI-coated vesicle membrane. Its function is as follows. The coatomer is a cytosolic protein complex that binds to dilysine motifs and reversibly associates with Golgi non-clathrin-coated vesicles, which further mediate biosynthetic protein transport from the ER, via the Golgi up to the trans Golgi network. The coatomer complex is required for budding from Golgi membranes, and is essential for the retrograde Golgi-to-ER transport of dilysine-tagged proteins. The sequence is that of Coatomer subunit epsilon-2 from Arabidopsis thaliana (Mouse-ear cress).